We begin with the raw amino-acid sequence, 488 residues long: Proline--tRNA ligase (488 aa).

Belongs to the class-II aminoacyl-tRNA synthetase family. ProS type 3 subfamily. As to quaternary structure, homodimer.

The protein localises to the cytoplasm. It carries out the reaction tRNA(Pro) + L-proline + ATP = L-prolyl-tRNA(Pro) + AMP + diphosphate. Catalyzes the attachment of proline to tRNA(Pro) in a two-step reaction: proline is first activated by ATP to form Pro-AMP and then transferred to the acceptor end of tRNA(Pro). This chain is Proline--tRNA ligase, found in Pyrobaculum aerophilum (strain ATCC 51768 / DSM 7523 / JCM 9630 / CIP 104966 / NBRC 100827 / IM2).